A 347-amino-acid chain; its full sequence is Probable G-protein coupled receptor 148 (347 aa).

Residues 1–51 (MGDELAPCPVGTTAWPALIQLISKTPCMPQAASNTSLGLGDLRVPSSMLYW) are Extracellular-facing. N-linked (GlcNAc...) asparagine glycosylation occurs at Asn-34. Residues 52 to 72 (LFLPSSLLAAATLAVSPLLLV) form a helical membrane-spanning segment. Over 73 to 85 (TILRNQRLRQEPH) the chain is Cytoplasmic. A helical membrane pass occupies residues 86 to 106 (YLLPANILLSDLAYILLHMLI). Residues 107-130 (SSSSLGGWELGRMACGILTDAVFA) are Extracellular-facing. The helical transmembrane segment at 131-151 (ACTSTILSFTAIVLHTYLAVI) threads the bilayer. Residues 152–165 (HPLRYLSFMSHGAA) lie on the Cytoplasmic side of the membrane. The helical transmembrane segment at 166 to 186 (WKAVALIWLVACCFPTFLIWL) threads the bilayer. At 187-214 (SKWQDAQLEEQGASYILPPSMGTQPGCG) the chain is on the extracellular side. A helical transmembrane segment spans residues 215-235 (LLVIVTYTSILCVLFLCTALI). The Cytoplasmic segment spans residues 236–261 (ANCFWRIYAEAKTSGIWGQGYSRARG). A helical membrane pass occupies residues 262–282 (TLLIHSVLITLYVSTGVVFSL). Topologically, residues 283-299 (DMVLTRYHHIDSGTHTW) are extracellular. The chain crosses the membrane as a helical span at residues 300 to 322 (LLAANSEVLMMLPRAMLTYLYLL). Topologically, residues 323–347 (RYRQLLGMVRGHLPSRRHQAIFTIS) are cytoplasmic.

This sequence belongs to the G-protein coupled receptor 1 family. In terms of tissue distribution, expression restricted to nervous system and testis. Is also detected in several tumors types, most notably prostate cancer.

The protein resides in the cell membrane. In terms of biological role, orphan receptor. In Homo sapiens (Human), this protein is Probable G-protein coupled receptor 148 (GPR148).